An 88-amino-acid chain; its full sequence is Small ribosomal subunit protein bS18B (88 aa).

It belongs to the bacterial ribosomal protein bS18 family. Part of the 30S ribosomal subunit. Forms a tight heterodimer with protein bS6.

Its function is as follows. Binds as a heterodimer with protein bS6 to the central domain of the 16S rRNA, where it helps stabilize the platform of the 30S subunit. This chain is Small ribosomal subunit protein bS18B (rpsR2), found in Mycobacterium bovis (strain ATCC BAA-935 / AF2122/97).